The primary structure comprises 767 residues: Probable NADP-dependent malic enzyme (767 aa).

The interval 1 to 430 (MDEMNKINYT…QLGSRLNPTA (430 aa)) is malic enzyme. Tyr42 functions as the Proton donor in the catalytic mechanism. Lys97 acts as the Proton acceptor in catalysis. The a divalent metal cation site is built by Glu139, Asp140, and Asp165. NADP(+)-binding positions include 198–201 (AGAA), Asn290, and Asn322. Positions 431 to 767 (NYMNFLAEKI…FACVEAIKEV (337 aa)) are phosphate acetyltransferase.

This sequence in the N-terminal section; belongs to the malic enzymes family. The protein in the C-terminal section; belongs to the phosphate acetyltransferase and butyryltransferase family. It depends on Mg(2+) as a cofactor. Mn(2+) is required as a cofactor.

The catalysed reaction is (S)-malate + NADP(+) = pyruvate + CO2 + NADPH. The enzyme catalyses oxaloacetate + H(+) = pyruvate + CO2. This Rickettsia prowazekii (strain Madrid E) protein is Probable NADP-dependent malic enzyme.